Consider the following 558-residue polypeptide: GPI mannosyltransferase 3 (558 aa).

A run of 4 helical transmembrane segments spans residues 53–73 (GLRS…LKLL), 81–101 (VWFA…VSVF), 164–184 (AYCG…LLTL), and 190–210 (VPFL…AVVL). Residue N220 is glycosylated (N-linked (GlcNAc...) asparagine). A helical membrane pass occupies residues 234–254 (IVLTGLIVLVAVLGGVMVLDY). N275 carries an N-linked (GlcNAc...) asparagine glycan. 4 helical membrane-spanning segments follow: residues 292-312 (VLVG…LVLW), 323-343 (PVLG…LIDH), 348-368 (FVFV…VRWS), and 372-392 (AVVV…IYLM).

This sequence belongs to the glycosyltransferase 22 family. PIGB subfamily.

The protein resides in the endoplasmic reticulum membrane. It participates in glycolipid biosynthesis; glycosylphosphatidylinositol-anchor biosynthesis. Mannosyltransferase involved in glycosylphosphatidylinositol-anchor biosynthesis. Transfers the third alpha-1,2-mannose to Man2-GlcN-acyl-PI during GPI precursor assembly. The protein is GPI mannosyltransferase 3 (GPI10) of Trypanosoma brucei brucei.